The following is a 455-amino-acid chain: UDP-glycosyltransferase 79B2 (455 aa).

UDP-alpha-D-glucose is bound by residues Ser-266, 325–327, 342–350, and 364–367; these read VQQ, HCGFGSMWE, and LGDQ.

It belongs to the UDP-glycosyltransferase family.

In Arabidopsis thaliana (Mouse-ear cress), this protein is UDP-glycosyltransferase 79B2 (UGT79B2).